Consider the following 285-residue polypeptide: ATP phosphoribosyltransferase (285 aa).

Belongs to the ATP phosphoribosyltransferase family. Long subfamily. It depends on Mg(2+) as a cofactor.

Its subcellular location is the cytoplasm. The catalysed reaction is 1-(5-phospho-beta-D-ribosyl)-ATP + diphosphate = 5-phospho-alpha-D-ribose 1-diphosphate + ATP. It functions in the pathway amino-acid biosynthesis; L-histidine biosynthesis; L-histidine from 5-phospho-alpha-D-ribose 1-diphosphate: step 1/9. Its activity is regulated as follows. Feedback inhibited by histidine. Catalyzes the condensation of ATP and 5-phosphoribose 1-diphosphate to form N'-(5'-phosphoribosyl)-ATP (PR-ATP). Has a crucial role in the pathway because the rate of histidine biosynthesis seems to be controlled primarily by regulation of HisG enzymatic activity. This chain is ATP phosphoribosyltransferase, found in Sulfolobus acidocaldarius (strain ATCC 33909 / DSM 639 / JCM 8929 / NBRC 15157 / NCIMB 11770).